Reading from the N-terminus, the 319-residue chain is Ribonuclease Z (319 aa).

Residues H62, H64, D66, H67, H145, D215, and H273 each contribute to the Zn(2+) site. Catalysis depends on D66, which acts as the Proton acceptor.

Belongs to the RNase Z family. In terms of assembly, homodimer. The cofactor is Zn(2+).

It catalyses the reaction Endonucleolytic cleavage of RNA, removing extra 3' nucleotides from tRNA precursor, generating 3' termini of tRNAs. A 3'-hydroxy group is left at the tRNA terminus and a 5'-phosphoryl group is left at the trailer molecule.. Zinc phosphodiesterase, which displays some tRNA 3'-processing endonuclease activity. Probably involved in tRNA maturation, by removing a 3'-trailer from precursor tRNA. This chain is Ribonuclease Z, found in Borreliella burgdorferi (strain ATCC 35210 / DSM 4680 / CIP 102532 / B31) (Borrelia burgdorferi).